The sequence spans 200 residues: Kunitz type trypsin inhibitor 111 (200 aa).

An N-terminal signal peptide occupies residues methionine 1–alanine 24. Disulfide bonds link cysteine 62–cysteine 108, cysteine 160–cysteine 172, and cysteine 165–cysteine 168.

Belongs to the protease inhibitor I3 (leguminous Kunitz-type inhibitor) family. Interacts with SCP1.

The protein localises to the secreted. It localises to the extracellular space. The protein resides in the apoplast. The protein is Kunitz type trypsin inhibitor 111 (KPI111) of Medicago truncatula (Barrel medic).